A 637-amino-acid polypeptide reads, in one-letter code: Zinc-transporting ATPase (637 aa).

The next 4 helical transmembrane spans lie at 43–63, 89–109, 258–278, and 286–306; these read GWLL…AFVI, IFAA…ILIF, GVLI…GWSW, and MVFM…PAAL. The active-site 4-aspartylphosphate intermediate is Asp337. Residues Asp535 and Asp539 each coordinate Mg(2+). The helical transmembrane segment at 599–619 threads the bilayer; that stretch reads VICLLICANFLQAMELPFGVI.

It belongs to the cation transport ATPase (P-type) (TC 3.A.3) family. Type IB subfamily.

The protein resides in the cell membrane. The enzyme catalyses Zn(2+)(out) + ATP(in) + H2O(in) = Zn(2+)(in) + ADP(in) + phosphate(in) + H(+)(in). Functionally, couples the hydrolysis of ATP with the transport of zinc into the cell. Plays an important role in protecting cells against oxidative stress. ZosA-mediated zinc transport is required for post-transcriptional control of comK and competence development. The protein is Zinc-transporting ATPase (zosA) of Bacillus subtilis (strain 168).